The following is a 437-amino-acid chain: GTPase Obg (437 aa).

Residues Ser-2–Leu-160 form the Obg domain. The 178-residue stretch at Ala-161–Ala-338 folds into the OBG-type G domain. Residues Gly-167 to Ser-174, Phe-192 to Val-196, Asp-214 to Gly-217, Asn-284 to Asp-287, and Ser-319 to Leu-321 contribute to the GTP site. The Mg(2+) site is built by Ser-174 and Thr-194. Residues Gly-359–Asp-437 form the OCT domain.

It belongs to the TRAFAC class OBG-HflX-like GTPase superfamily. OBG GTPase family. As to quaternary structure, monomer. Requires Mg(2+) as cofactor.

Its subcellular location is the cytoplasm. Functionally, an essential GTPase which binds GTP, GDP and possibly (p)ppGpp with moderate affinity, with high nucleotide exchange rates and a fairly low GTP hydrolysis rate. Plays a role in control of the cell cycle, stress response, ribosome biogenesis and in those bacteria that undergo differentiation, in morphogenesis control. The chain is GTPase Obg from Streptococcus equi subsp. equi (strain 4047).